Reading from the N-terminus, the 222-residue chain is 2-C-methyl-D-erythritol 4-phosphate cytidylyltransferase (222 aa).

It belongs to the IspD/TarI cytidylyltransferase family. IspD subfamily.

The catalysed reaction is 2-C-methyl-D-erythritol 4-phosphate + CTP + H(+) = 4-CDP-2-C-methyl-D-erythritol + diphosphate. The protein operates within isoprenoid biosynthesis; isopentenyl diphosphate biosynthesis via DXP pathway; isopentenyl diphosphate from 1-deoxy-D-xylulose 5-phosphate: step 2/6. Its function is as follows. Catalyzes the formation of 4-diphosphocytidyl-2-C-methyl-D-erythritol from CTP and 2-C-methyl-D-erythritol 4-phosphate (MEP). The sequence is that of 2-C-methyl-D-erythritol 4-phosphate cytidylyltransferase from Thermotoga sp. (strain RQ2).